Reading from the N-terminus, the 116-residue chain is Large ribosomal subunit protein uL18 (116 aa).

This sequence belongs to the universal ribosomal protein uL18 family. In terms of assembly, part of the 50S ribosomal subunit; part of the 5S rRNA/L5/L18/L25 subcomplex. Contacts the 5S and 23S rRNAs.

In terms of biological role, this is one of the proteins that bind and probably mediate the attachment of the 5S RNA into the large ribosomal subunit, where it forms part of the central protuberance. The chain is Large ribosomal subunit protein uL18 from Pseudomonas aeruginosa (strain UCBPP-PA14).